We begin with the raw amino-acid sequence, 329 residues long: Glutamyl-tRNA reductase (329 aa).

Residues 51-54 (TCLR), Ser99, 104-106 (EDQ), and Gln110 each bind substrate. The Nucleophile role is filled by Cys52. Position 179-184 (179-184 (GIGELA)) interacts with NADP(+).

It belongs to the glutamyl-tRNA reductase family. In terms of assembly, homodimer.

The catalysed reaction is (S)-4-amino-5-oxopentanoate + tRNA(Glu) + NADP(+) = L-glutamyl-tRNA(Glu) + NADPH + H(+). Its pathway is porphyrin-containing compound metabolism; protoporphyrin-IX biosynthesis; 5-aminolevulinate from L-glutamyl-tRNA(Glu): step 1/2. In terms of biological role, catalyzes the NADPH-dependent reduction of glutamyl-tRNA(Glu) to glutamate 1-semialdehyde (GSA). This chain is Glutamyl-tRNA reductase, found in Fusobacterium nucleatum subsp. nucleatum (strain ATCC 25586 / DSM 15643 / BCRC 10681 / CIP 101130 / JCM 8532 / KCTC 2640 / LMG 13131 / VPI 4355).